Consider the following 131-residue polypeptide: Small ribosomal subunit protein uS11 (131 aa).

This sequence belongs to the universal ribosomal protein uS11 family. Part of the 30S ribosomal subunit. Interacts with proteins S7 and S18. Binds to IF-3.

Its function is as follows. Located on the platform of the 30S subunit, it bridges several disparate RNA helices of the 16S rRNA. Forms part of the Shine-Dalgarno cleft in the 70S ribosome. This is Small ribosomal subunit protein uS11 from Clostridium novyi (strain NT).